The primary structure comprises 1227 residues: Protein U7 (1227 aa).

The protein belongs to the herpesviridae US22 family.

This chain is Protein U7 (U7/U5), found in Homo sapiens (Human).